The following is a 173-amino-acid chain: Cyclic pyranopterin monophosphate synthase (173 aa).

Substrate contacts are provided by residues 75-77 and 117-118; these read MCH and ME. Residue Asp-132 is part of the active site. Positions 152–173 are disordered; the sequence is SGGKSGHYQRENSSVGGFANEQ. Residues 162–173 are compositionally biased toward polar residues; that stretch reads ENSSVGGFANEQ.

Belongs to the MoaC family. In terms of assembly, homohexamer; trimer of dimers.

It catalyses the reaction (8S)-3',8-cyclo-7,8-dihydroguanosine 5'-triphosphate = cyclic pyranopterin phosphate + diphosphate. Its pathway is cofactor biosynthesis; molybdopterin biosynthesis. Functionally, catalyzes the conversion of (8S)-3',8-cyclo-7,8-dihydroguanosine 5'-triphosphate to cyclic pyranopterin monophosphate (cPMP). In Geobacillus sp. (strain WCH70), this protein is Cyclic pyranopterin monophosphate synthase.